The primary structure comprises 412 residues: Gamma-glutamyl phosphate reductase (412 aa).

The protein belongs to the gamma-glutamyl phosphate reductase family.

It is found in the cytoplasm. It carries out the reaction L-glutamate 5-semialdehyde + phosphate + NADP(+) = L-glutamyl 5-phosphate + NADPH + H(+). The protein operates within amino-acid biosynthesis; L-proline biosynthesis; L-glutamate 5-semialdehyde from L-glutamate: step 2/2. Catalyzes the NADPH-dependent reduction of L-glutamate 5-phosphate into L-glutamate 5-semialdehyde and phosphate. The product spontaneously undergoes cyclization to form 1-pyrroline-5-carboxylate. The chain is Gamma-glutamyl phosphate reductase from Actinobacillus pleuropneumoniae serotype 3 (strain JL03).